A 402-amino-acid polypeptide reads, in one-letter code: Protein RETARDED ROOT GROWTH-LIKE (402 aa).

A helical transmembrane segment spans residues 375-395 (SATLEWLIIILISMEIAISFY).

Belongs to the RMD1/sif2 family. In terms of tissue distribution, highly expressed in germinating seeds and developing seedlings. Also present at low levels in seedlings, roots, leaves, stems and flowers, and barely in siliques.

The protein resides in the mitochondrion membrane. Its subcellular location is the mitochondrion. Its function is as follows. Mediates abscisic acid (ABA) signal transduction through mitochondrial retrograde regulation involving ABI4 during seed germination and seedling growth, and leading to the production of reactive oxygen species (ROS) by the alternative respiratory pathway. Required for the maintenance of mitochondrial structure. In Arabidopsis thaliana (Mouse-ear cress), this protein is Protein RETARDED ROOT GROWTH-LIKE.